A 428-amino-acid chain; its full sequence is Sulfhydrogenase 1 subunit alpha (428 aa).

The Ni(2+) site is built by Cys-65, Cys-68, Cys-418, and Cys-421. Cys-68 serves as a coordination point for Fe cation. Cys-421 serves as a coordination point for Fe cation.

Belongs to the [NiFe]/[NiFeSe] hydrogenase large subunit family. In terms of assembly, heterotetramer of alpha, beta, gamma and delta subunits. The nickel-containing alpha and delta subunits constitute the hydrogenase activity. The beta and gamma subunits (flavin-containing dimer) constitute the sulfur reductase activity. Ni(2+) serves as cofactor. Requires Fe cation as cofactor.

It is found in the cytoplasm. It catalyses the reaction H2 + NADP(+) = NADPH + H(+). Part of a bifunctional enzyme complex that functions as an NADPH-dependent hydrogen-evolving hydrogenase with sulfur-reducing activity. May play a role in hydrogen cycling during fermentative growth. Activity not exhibited with NAD. The alpha and delta subunits form the hydrogenase component that catalyzes the reduction of protons to evolve hydrogen. This Pyrococcus furiosus (strain ATCC 43587 / DSM 3638 / JCM 8422 / Vc1) protein is Sulfhydrogenase 1 subunit alpha.